We begin with the raw amino-acid sequence, 520 residues long: Laccase (520 aa).

Positions 1-21 are cleaved as a signal peptide; the sequence is MSRFQSLLAFVVASLAAVAHA. 2 consecutive Plastocyanin-like domains span residues 23–148 and 160–302; these read IGPT…FVVY and VDND…ILRY. N-linked (GlcNAc...) asparagine glycosylation is found at N72 and N75. 4 residues coordinate Cu cation: H85, H87, H130, and H132. Disulfide bonds link C106-C509 and C138-C226. N210, N229, and N354 each carry an N-linked (GlcNAc...) asparagine glycan. Residues 369 to 491 enclose the Plastocyanin-like 3 domain; it reads TVPVLLQIIS…AGFAVVFAED (123 aa). Residues H416, H419, H421, H473, C474, H475, and H479 each coordinate Cu cation.

Belongs to the multicopper oxidase family. Cu cation serves as cofactor.

The protein localises to the secreted. It carries out the reaction 4 hydroquinone + O2 = 4 benzosemiquinone + 2 H2O. Its function is as follows. Lignin degradation and detoxification of lignin-derived products. Has activity towards guaiacol. This is Laccase from Trametes hirsuta (White-rot fungus).